We begin with the raw amino-acid sequence, 352 residues long: MGEDMRGVKVVSKWPPMIVMVTSQVAMGSVNALVKKALDVGVNHMIIGAYRMAISSFILVPIAYFLERKIIPKITFRLMVDHFISGLLGASLMQFFYLLGLSYTSATVACALVSLMPAITFAFALILRTEKIKDLKTQAGMIKVMGTLICISGALFLTFYKGPHISNSHSHLEALPHNNSDHNTKNWLLGCLYLVIGIVLLSLWILFQGTLSIKYPCKFSSTCLMSIFAAFQCALLSLYKSRDLKHWIIDDGFVIGVIIYAGVIGQAMSTVAATWGINRLGAVFASAIMPVSLISATLFDFLILHTPLYLGSVIGSVGTIIGLYVFLWGKNKETEADITTLSSRMNNEDQRV.

Helical transmembrane passes span 14–34 (WPPMIVMVTSQVAMGSVNALV), 46–66 (IIGAYRMAISSFILVPIAYFL), 83–103 (FISGLLGASLMQFFYLLGLSY), 107–127 (TVACALVSLMPAITFAFALIL), 139–159 (AGMIKVMGTLICISGALFLTF), 187–207 (WLLGCLYLVIGIVLLSLWILF), 219–239 (FSSTCLMSIFAAFQCALLSLY), 253–273 (FVIGVIIYAGVIGQAMSTVAA), 283–303 (VFASAIMPVSLISATLFDFLI), and 308–328 (LYLGSVIGSVGTIIGLYVFLW). 2 consecutive EamA domains span residues 27–157 (MGSV…ALFL) and 192–335 (LYLV…KETE).

It belongs to the drug/metabolite transporter (DMT) superfamily. Plant drug/metabolite exporter (P-DME) (TC 2.A.7.4) family.

The protein resides in the membrane. The sequence is that of WAT1-related protein At1g11450 from Arabidopsis thaliana (Mouse-ear cress).